Here is a 367-residue protein sequence, read N- to C-terminus: 4-hydroxy-3-methylbut-2-en-1-yl diphosphate synthase (flavodoxin) (367 aa).

The [4Fe-4S] cluster site is built by Cys-268, Cys-271, Cys-303, and Glu-310.

It belongs to the IspG family. [4Fe-4S] cluster serves as cofactor.

The catalysed reaction is (2E)-4-hydroxy-3-methylbut-2-enyl diphosphate + oxidized [flavodoxin] + H2O + 2 H(+) = 2-C-methyl-D-erythritol 2,4-cyclic diphosphate + reduced [flavodoxin]. It participates in isoprenoid biosynthesis; isopentenyl diphosphate biosynthesis via DXP pathway; isopentenyl diphosphate from 1-deoxy-D-xylulose 5-phosphate: step 5/6. Converts 2C-methyl-D-erythritol 2,4-cyclodiphosphate (ME-2,4cPP) into 1-hydroxy-2-methyl-2-(E)-butenyl 4-diphosphate. This Shouchella clausii (strain KSM-K16) (Alkalihalobacillus clausii) protein is 4-hydroxy-3-methylbut-2-en-1-yl diphosphate synthase (flavodoxin).